The sequence spans 104 residues: Evasin P1174 (104 aa).

Residues 1–27 form the signal peptide; sequence LKTFCLFLQIAVFIALGIQIFLCGTDA. Intrachain disulfides connect Cys-40–Cys-59, Cys-44–Cys-61, and Cys-55–Cys-72. 3 N-linked (GlcNAc...) asparagine glycosylation sites follow: Asn-43, Asn-49, and Asn-58. The interval 85–104 is disordered; that stretch reads KPTSEEIADASPRPKETNSH.

Its subcellular location is the secreted. Functionally, salivary chemokine-binding protein which binds to host chemokines CXCL1 and CXCL8. The protein is Evasin P1174 of Ixodes ricinus (Common tick).